We begin with the raw amino-acid sequence, 459 residues long: Argininosuccinate lyase (459 aa).

Belongs to the lyase 1 family. Argininosuccinate lyase subfamily.

It localises to the cytoplasm. It carries out the reaction 2-(N(omega)-L-arginino)succinate = fumarate + L-arginine. The protein operates within amino-acid biosynthesis; L-arginine biosynthesis; L-arginine from L-ornithine and carbamoyl phosphate: step 3/3. The sequence is that of Argininosuccinate lyase from Ruminiclostridium cellulolyticum (strain ATCC 35319 / DSM 5812 / JCM 6584 / H10) (Clostridium cellulolyticum).